The following is a 503-amino-acid chain: Maturase K (503 aa).

It belongs to the intron maturase 2 family. MatK subfamily.

It localises to the plastid. The protein resides in the chloroplast. Its function is as follows. Usually encoded in the trnK tRNA gene intron. Probably assists in splicing its own and other chloroplast group II introns. This is Maturase K from Psilotum nudum (Whisk fern).